The sequence spans 282 residues: HTH-type transcriptional activator RhaR (282 aa).

Residues 179–277 (DKLITRLAAS…GMTPSQWRHL (99 aa)) form the HTH araC/xylS-type domain. 2 DNA-binding regions (H-T-H motif) span residues 196–217 (DKFC…RQQT) and 244–267 (ISDI…TRET).

Binds DNA as a dimer.

The protein localises to the cytoplasm. In terms of biological role, activates expression of the rhaSR operon in response to L-rhamnose. This Shigella dysenteriae serotype 1 (strain Sd197) protein is HTH-type transcriptional activator RhaR.